Consider the following 413-residue polypeptide: Probable tRNA pseudouridine synthase D (413 aa).

Aspartate 97 acts as the Nucleophile in catalysis. The TRUD domain occupies alanine 167–glutamate 370.

It belongs to the pseudouridine synthase TruD family.

The catalysed reaction is uridine(13) in tRNA = pseudouridine(13) in tRNA. Functionally, could be responsible for synthesis of pseudouridine from uracil-13 in transfer RNAs. This is Probable tRNA pseudouridine synthase D from Pyrobaculum arsenaticum (strain DSM 13514 / JCM 11321 / PZ6).